Reading from the N-terminus, the 216-residue chain is Serine acetyltransferase (216 aa).

It belongs to the transferase hexapeptide repeat family.

The protein resides in the cytoplasm. It carries out the reaction L-serine + acetyl-CoA = O-acetyl-L-serine + CoA. The protein operates within amino-acid biosynthesis; L-cysteine biosynthesis; L-cysteine from L-serine: step 1/2. Inhibited by cysteine. Catalyzes the acetylation of serine by acetyl-CoA to produce O-acetylserine (OAS). This Bacillus licheniformis (strain ATCC 14580 / DSM 13 / JCM 2505 / CCUG 7422 / NBRC 12200 / NCIMB 9375 / NCTC 10341 / NRRL NRS-1264 / Gibson 46) protein is Serine acetyltransferase.